We begin with the raw amino-acid sequence, 237 residues long: Ribosomal RNA small subunit methyltransferase G (237 aa).

S-adenosyl-L-methionine is bound by residues glycine 78, phenylalanine 83, 129-130 (AE), and arginine 148. The interval 216 to 237 (SKKKETPNKYPRKAGTPNKKPL) is disordered.

It belongs to the methyltransferase superfamily. RNA methyltransferase RsmG family.

Its subcellular location is the cytoplasm. In terms of biological role, specifically methylates the N7 position of a guanine in 16S rRNA. In Streptococcus agalactiae serotype III (strain NEM316), this protein is Ribosomal RNA small subunit methyltransferase G.